Here is a 443-residue protein sequence, read N- to C-terminus: Glutamate-1-semialdehyde 2,1-aminomutase (443 aa).

At K272 the chain carries N6-(pyridoxal phosphate)lysine.

It belongs to the class-III pyridoxal-phosphate-dependent aminotransferase family. HemL subfamily. As to quaternary structure, homodimer. The cofactor is pyridoxal 5'-phosphate.

It is found in the cytoplasm. It carries out the reaction (S)-4-amino-5-oxopentanoate = 5-aminolevulinate. It functions in the pathway porphyrin-containing compound metabolism; protoporphyrin-IX biosynthesis; 5-aminolevulinate from L-glutamyl-tRNA(Glu): step 2/2. Its pathway is porphyrin-containing compound metabolism; chlorophyll biosynthesis. The protein is Glutamate-1-semialdehyde 2,1-aminomutase of Chloroflexus aurantiacus (strain ATCC 29366 / DSM 635 / J-10-fl).